The primary structure comprises 337 residues: DNA-directed RNA polymerase subunit alpha (337 aa).

Residues methionine 1–glutamate 233 are alpha N-terminal domain (alpha-NTD). The alpha C-terminal domain (alpha-CTD) stretch occupies residues glycine 266–isoleucine 337.

Belongs to the RNA polymerase alpha chain family. In terms of assembly, in plastids the minimal PEP RNA polymerase catalytic core is composed of four subunits: alpha, beta, beta', and beta''. When a (nuclear-encoded) sigma factor is associated with the core the holoenzyme is formed, which can initiate transcription.

It is found in the plastid. The protein resides in the chloroplast. The enzyme catalyses RNA(n) + a ribonucleoside 5'-triphosphate = RNA(n+1) + diphosphate. DNA-dependent RNA polymerase catalyzes the transcription of DNA into RNA using the four ribonucleoside triphosphates as substrates. The polypeptide is DNA-directed RNA polymerase subunit alpha (Dioscorea elephantipes (Elephant's foot yam)).